We begin with the raw amino-acid sequence, 143 residues long: Nitrosuccinic acid decarboxylase npaB (143 aa).

This sequence belongs to the carboxymuconolactone decarboxylase family. Mg(2+) serves as cofactor.

It participates in mycotoxin biosynthesis. Its function is as follows. Nitrosuccinic acid decarboxylase; part of the gene cluster that mediates the biosynthesis of the deadly neurotoxic nitroalkane 3-nitropropanoic acid (3-NPA) that acts as an antimetabolite of succinate and irreversibly inhibits succinate dehydrogenase and disrupts mitochondrial oxidative phosphorylation. NpaB facilitates decarboxylation of nitrosuccinic acid produced by the nitrosuccinic acid synthase npaA to yield the final product of the cluster, the lethal mycotoxin 3-NPA. This Metarhizium robertsii (strain ARSEF 23 / ATCC MYA-3075) (Metarhizium anisopliae (strain ARSEF 23)) protein is Nitrosuccinic acid decarboxylase npaB.